The sequence spans 101 residues: Small ribosomal subunit protein bS18c (101 aa).

The span at 1-19 shows a compositional bias: basic residues; that stretch reads MNKSKRPFTKSKRSFRRRL. The segment at 1–20 is disordered; that stretch reads MNKSKRPFTKSKRSFRRRLP.

It belongs to the bacterial ribosomal protein bS18 family. As to quaternary structure, part of the 30S ribosomal subunit.

Its subcellular location is the plastid. It is found in the chloroplast. The chain is Small ribosomal subunit protein bS18c from Arabis hirsuta (Hairy rock-cress).